We begin with the raw amino-acid sequence, 265 residues long: L-histidine 2-aminobutanoyltransferase (265 aa).

This sequence belongs to the methyltransferase superfamily. CntL family.

The enzyme catalyses L-histidine + S-adenosyl-L-methionine = (2S)-2-amino-4-{[(1S)-1-carboxy-2-(1H-imidazol-4-yl)ethyl]amino}butanoate + S-methyl-5'-thioadenosine + H(+). Its function is as follows. Catalyzes the nucleophilic attack of one alpha-aminobutanoate moiety from SAM onto L-histidine to produce the intermediate (2S)-2-amino-4-{[(1S)-1-carboxy-2-(1H-imidazol-4-yl)ethyl]amino}butanoate. Functions in the biosynthesis of the metallophore yersinopine, which is involved in metal acquisition and thus enables bacterial growth inside the host, where metal access is limited. Therefore, this enzyme probably contributes to Yersinia virulence. The sequence is that of L-histidine 2-aminobutanoyltransferase from Yersinia pestis.